We begin with the raw amino-acid sequence, 249 residues long: Purine nucleoside phosphorylase ML0918 (249 aa).

Zn(2+) is bound by residues His72, Cys109, and His126.

This sequence belongs to the purine nucleoside phosphorylase YfiH/LACC1 family. Homodimer. Cu(2+) serves as cofactor. It depends on Zn(2+) as a cofactor.

It carries out the reaction adenosine + phosphate = alpha-D-ribose 1-phosphate + adenine. The enzyme catalyses S-methyl-5'-thioadenosine + phosphate = 5-(methylsulfanyl)-alpha-D-ribose 1-phosphate + adenine. It catalyses the reaction inosine + phosphate = alpha-D-ribose 1-phosphate + hypoxanthine. The catalysed reaction is adenosine + H2O + H(+) = inosine + NH4(+). Its function is as follows. Purine nucleoside enzyme that catalyzes the phosphorolysis of adenosine and inosine nucleosides, yielding D-ribose 1-phosphate and the respective free bases, adenine and hypoxanthine. Also catalyzes the phosphorolysis of S-methyl-5'-thioadenosine into adenine and S-methyl-5-thio-alpha-D-ribose 1-phosphate. Also has adenosine deaminase activity. This is Purine nucleoside phosphorylase ML0918 from Mycobacterium leprae (strain TN).